We begin with the raw amino-acid sequence, 149 residues long: Protein FAM72A (149 aa).

This sequence belongs to the FAM72 family. As to quaternary structure, interacts with UNG. As to expression, may be up-regulated in malignant colon cancers, compared to normal colon and colon adenomas. Expression is also elevated in other common cancer types, including breast, lung, uterus, and ovary.

It localises to the cytoplasm. Its subcellular location is the mitochondrion. In terms of biological role, may play a role in the regulation of cellular reactive oxygen species metabolism. May participate in cell growth regulation. The sequence is that of Protein FAM72A (FAM72A) from Homo sapiens (Human).